A 287-amino-acid polypeptide reads, in one-letter code: ATP synthase gamma chain (287 aa).

Belongs to the ATPase gamma chain family. In terms of assembly, F-type ATPases have 2 components, CF(1) - the catalytic core - and CF(0) - the membrane proton channel. CF(1) has five subunits: alpha(3), beta(3), gamma(1), delta(1), epsilon(1). CF(0) has three main subunits: a, b and c.

It localises to the cell inner membrane. Produces ATP from ADP in the presence of a proton gradient across the membrane. The gamma chain is believed to be important in regulating ATPase activity and the flow of protons through the CF(0) complex. In Geobacter sp. (strain M21), this protein is ATP synthase gamma chain.